A 536-amino-acid chain; its full sequence is MKETGIHNKAASISTSGLKELSAVFYNLGPARLYEETIRRGEAELSAQGALVARTGQHTGRSPKDKFVVRDANTEDHVWWDNNKPMTPEAFELLYADFIEHAKGRELFVQDLIGGADADNKINARVITEYAWHSLFIRNLLIRPSQEALASYVPEMTIIDLPSFKADPERYGVRTETVIAVDLTRKIVLIGGTSYAGEMKKSVFTALNYILPAKGVMPMHCSANEGPNGDTAVFFGLSGTGKTTLSADPTRTLIGDDEHGWGEHGVFNFEGGCYAKTIRLSAEAEPEIYATTQRFGTVLENVVLDENRQPDFDDGSLTENTRCAYPLDFIPNASKSGKGGQPKNIIMLTADAFGVMPPIAKLTPAQAMYHFLSGYTAKVAGTEKGVTEPEATFSTCFGAPFMPRHPSEYGNLLRKLIAEHKVDCWLVNTGWTGGAYGVGKRMPIKATRALLAAALDGSLNNAEFRIDPNFGFAVPVEVPGVESSILDPRSTWADKVAYDAQAKKLVDMFVSNFEKFESHVDHEVKDAAPAIRMAAE.

3 residues coordinate substrate: R61, Y195, and K201. ATP contacts are provided by residues K201, H220, and 236 to 244 (GLSGTGKTT). Mn(2+)-binding residues include K201 and H220. Position 257 (D257) interacts with Mn(2+). E285, R322, and T447 together coordinate ATP. Position 322 (R322) interacts with substrate.

The protein belongs to the phosphoenolpyruvate carboxykinase (ATP) family. The cofactor is Mn(2+).

Its subcellular location is the cytoplasm. It catalyses the reaction oxaloacetate + ATP = phosphoenolpyruvate + ADP + CO2. It participates in carbohydrate biosynthesis; gluconeogenesis. Functionally, involved in the gluconeogenesis. Catalyzes the conversion of oxaloacetate (OAA) to phosphoenolpyruvate (PEP) through direct phosphoryl transfer between the nucleoside triphosphate and OAA. The protein is Phosphoenolpyruvate carboxykinase (ATP) of Brucella suis biovar 1 (strain 1330).